Here is a 946-residue protein sequence, read N- to C-terminus: Protein translocase subunit SecA (946 aa).

ATP contacts are provided by residues glutamine 89, glycine 107 to threonine 111, and aspartate 508. Residues proline 534–serine 569 are disordered. Residues arginine 546–serine 569 show a composition bias toward basic and acidic residues.

This sequence belongs to the SecA family. Monomer and homodimer. Part of the essential Sec protein translocation apparatus which comprises SecA, SecYEG and auxiliary proteins SecDF. Other proteins may also be involved.

The protein resides in the cell inner membrane. The protein localises to the cellular thylakoid membrane. Its subcellular location is the cytoplasm. It catalyses the reaction ATP + H2O + cellular proteinSide 1 = ADP + phosphate + cellular proteinSide 2.. In terms of biological role, part of the Sec protein translocase complex. Interacts with the SecYEG preprotein conducting channel. Has a central role in coupling the hydrolysis of ATP to the transfer of proteins into and across the cell membrane, serving as an ATP-driven molecular motor driving the stepwise translocation of polypeptide chains across the membrane. Functionally, probably participates in protein translocation into and across both the cytoplasmic and thylakoid membranes in cyanobacterial cells. The chain is Protein translocase subunit SecA from Prochlorococcus marinus (strain SARG / CCMP1375 / SS120).